Reading from the N-terminus, the 277-residue chain is 4-hydroxy-3-methylbut-2-enyl diphosphate reductase (277 aa).

C12 lines the [4Fe-4S] cluster pocket. Residues H36 and H70 each coordinate (2E)-4-hydroxy-3-methylbut-2-enyl diphosphate. H36 and H70 together coordinate dimethylallyl diphosphate. Positions 36 and 70 each coordinate isopentenyl diphosphate. C92 is a [4Fe-4S] cluster binding site. H120 provides a ligand contact to (2E)-4-hydroxy-3-methylbut-2-enyl diphosphate. Residue H120 coordinates dimethylallyl diphosphate. H120 is a binding site for isopentenyl diphosphate. Residue E122 is the Proton donor of the active site. Residue T158 participates in (2E)-4-hydroxy-3-methylbut-2-enyl diphosphate binding. C186 serves as a coordination point for [4Fe-4S] cluster. Residues S214, N216, and S258 each coordinate (2E)-4-hydroxy-3-methylbut-2-enyl diphosphate. Dimethylallyl diphosphate-binding residues include S214, N216, and S258. The isopentenyl diphosphate site is built by S214, N216, and S258.

This sequence belongs to the IspH family. The cofactor is [4Fe-4S] cluster.

The catalysed reaction is isopentenyl diphosphate + 2 oxidized [2Fe-2S]-[ferredoxin] + H2O = (2E)-4-hydroxy-3-methylbut-2-enyl diphosphate + 2 reduced [2Fe-2S]-[ferredoxin] + 2 H(+). The enzyme catalyses dimethylallyl diphosphate + 2 oxidized [2Fe-2S]-[ferredoxin] + H2O = (2E)-4-hydroxy-3-methylbut-2-enyl diphosphate + 2 reduced [2Fe-2S]-[ferredoxin] + 2 H(+). Its pathway is isoprenoid biosynthesis; dimethylallyl diphosphate biosynthesis; dimethylallyl diphosphate from (2E)-4-hydroxy-3-methylbutenyl diphosphate: step 1/1. The protein operates within isoprenoid biosynthesis; isopentenyl diphosphate biosynthesis via DXP pathway; isopentenyl diphosphate from 1-deoxy-D-xylulose 5-phosphate: step 6/6. In terms of biological role, catalyzes the conversion of 1-hydroxy-2-methyl-2-(E)-butenyl 4-diphosphate (HMBPP) into a mixture of isopentenyl diphosphate (IPP) and dimethylallyl diphosphate (DMAPP). Acts in the terminal step of the DOXP/MEP pathway for isoprenoid precursor biosynthesis. The protein is 4-hydroxy-3-methylbut-2-enyl diphosphate reductase of Campylobacter jejuni subsp. jejuni serotype O:2 (strain ATCC 700819 / NCTC 11168).